Here is a 318-residue protein sequence, read N- to C-terminus: Beta-galactosidase small subunit (318 aa).

Belongs to the bacterial beta-galactosidase small subunit family. In terms of assembly, heterodimer of a large (LacL) and a small subunit (LacM).

It catalyses the reaction Hydrolysis of terminal non-reducing beta-D-galactose residues in beta-D-galactosides.. In terms of biological role, component of a beta-galactosidase. In Latilactobacillus sakei (Lactobacillus sakei), this protein is Beta-galactosidase small subunit.